Consider the following 380-residue polypeptide: Protein Wnt-5a (380 aa).

A signal peptide spans 1–40 (MRKNLWTFQFGGEASGLVGSAMVSQHFVVLLMSLYCLTQS). Cys-104 and Cys-115 form a disulfide bridge. Residues Asn-114 and Asn-120 are each glycosylated (N-linked (GlcNAc...) asparagine). Intrachain disulfides connect Cys-154–Cys-162, Cys-164–Cys-182, Cys-238–Cys-252, Cys-240–Cys-247, Cys-309–Cys-340, Cys-325–Cys-335, Cys-339–Cys-379, Cys-355–Cys-370, Cys-357–Cys-367, and Cys-362–Cys-363. Ser-244 carries the O-palmitoleoyl serine; by PORCN lipid modification. Asn-312 and Asn-326 each carry an N-linked (GlcNAc...) asparagine glycan.

It belongs to the Wnt family. Palmitoleoylation is required for efficient binding to frizzled receptors. Depalmitoleoylation leads to Wnt signaling pathway inhibition. As to expression, found primarily in ectoderm with lower levels of expression in mesoderm. Detected in the head and tail with lower expression in the middle of the embryo. No expression was found in the notochord.

It is found in the secreted. The protein localises to the extracellular space. Its subcellular location is the extracellular matrix. Functionally, ligand for members of the frizzled family of seven transmembrane receptors. Can activate or inhibit canonical Wnt signaling, depending on receptor context. Plays a role in normal embryonic development. The polypeptide is Protein Wnt-5a (wnt5a) (Xenopus laevis (African clawed frog)).